The sequence spans 83 residues: U5-theraphotoxin-Hs1a 1 (83 aa).

Residues 1–21 (MKTSMFLTLTGLGLLFVVCYA) form the signal peptide. A propeptide spanning residues 22–49 (SESEEKEFPKELLSSIFAADSDFKVEER) is cleaved from the precursor. Cystine bridges form between C51-C63, C56-C68, and C62-C75.

The protein belongs to the neurotoxin 10 (Hwtx-1) family. 51 (Hntx-8) subfamily. Hntx-8 sub-subfamily. Expressed by the venom gland.

It localises to the secreted. Agglutinates human and mice erythrocytes. This activity can be specifically inhibited by mannosamine. This lectin shows very low toxicity in both mammals and insects. The chain is U5-theraphotoxin-Hs1a 1 from Cyriopagopus schmidti (Chinese bird spider).